A 354-amino-acid polypeptide reads, in one-letter code: Homer protein homolog 2 (354 aa).

The 110-residue stretch at 1-110 folds into the WH1 domain; that stretch reads MGEQPIFTTR…EKFQEVREAA (110 aa). Residues 92–120 adopt a coiled-coil conformation; the sequence is SEQQLTKFAEKFQEVREAARLARDKSQEK. Positions 114–163 are disordered; it reads RDKSQEKIETSSNHSQESGCETPSSTQASSVNGTDDEKASHASPADTHLK. A compositionally biased stretch (polar residues) spans 123–146; that stretch reads TSSNHSQESGCETPSSTQASSVNG. Residues 160-329 are a coiled coil; sequence THLKSENDKL…RHLKGELKSF (170 aa).

The protein belongs to the Homer family. In terms of assembly, isoform 1 and isoform 2 encode coiled-coil structures that mediate homo- and heteromultimerization. Interacts with NFATC2; interaction is reduced by AKT activation. Interacts with NFATC1 and NFATC4. Interacts with DAGLA (via PPXXF motif); this interaction is required for the cell membrane localization of DAGLA. As to expression, constitutively expressed in the adult hippocampus.

It is found in the cytoplasm. Its subcellular location is the cell membrane. It localises to the postsynaptic density. The protein localises to the synapse. The protein resides in the cell projection. It is found in the stereocilium. Postsynaptic density scaffolding protein. Binds and cross-links cytoplasmic regions of GRM1, GRM5, ITPR1, DNM3, RYR1, RYR2, SHANK1 and SHANK3. By physically linking GRM1 and GRM5 with ER-associated ITPR1 receptors, it aids the coupling of surface receptors to intracellular calcium release. May also couple GRM1 to PI3 kinase through its interaction with AGAP2. Isoforms can be differently regulated and may play an important role in maintaining the plasticity at glutamatergic synapses. Required for normal hearing. Negatively regulates T cell activation by inhibiting the calcineurin-NFAT pathway. Acts by competing with calcineurin/PPP3CA for NFAT protein binding, hence preventing NFAT activation by PPP3CA. The chain is Homer protein homolog 2 from Rattus norvegicus (Rat).